A 49-amino-acid chain; its full sequence is Large ribosomal subunit protein bL33 (49 aa).

This sequence belongs to the bacterial ribosomal protein bL33 family.

The sequence is that of Large ribosomal subunit protein bL33 from Syntrophus aciditrophicus (strain SB).